The primary structure comprises 368 residues: 2-deoxy-scyllo-inosose synthase (368 aa).

Residues Asp-42, 72 to 75, 104 to 108, 128 to 129, 139 to 141, 150 to 151, and Gln-176 contribute to the NAD(+) site; these read EEYK, GLTGN, TT, SIK, and KN. Lys-141 is a catalytic residue. Glu-183 lines the Co(2+) pocket. Glu-243 is a catalytic residue. 2 residues coordinate Co(2+): His-246 and His-262.

This sequence belongs to the sugar phosphate cyclases superfamily. DOI synthase family. In terms of assembly, was isolated as a heterodimeric enzyme comprising of BtrC and a smaller polypeptide further identified as PdxT by sequence homology. Homodimer in solution. NAD(+) is required as a cofactor. The cofactor is Co(2+).

The enzyme catalyses D-glucose 6-phosphate = 2-deoxy-L-scyllo-inosose + phosphate. The protein operates within metabolic intermediate biosynthesis; 2-deoxystreptamine biosynthesis; 2-deoxystreptamine from D-glucose 6-phosphate: step 1/4. It functions in the pathway antibiotic biosynthesis; butirosin biosynthesis. Its activity is regulated as follows. Strongly inhibited by EDTA, zinc and Cu(2+). Catalyzes the intramolecular carbocycle formation from D-glucose-6-phosphate to 2-deoxy-scyllo-inosose (DOI). This chain is 2-deoxy-scyllo-inosose synthase (btrC), found in Niallia circulans (Bacillus circulans).